The sequence spans 505 residues: Histidine--tRNA ligase, mitochondrial (505 aa).

Residues 1-31 constitute a mitochondrion transit peptide; it reads MPHLGPLRRRAWAALLGQLLRPPSTVCTRGC. Ser66 carries the phosphoserine modification. L-histidine is bound by residues 130 to 132, Arg157, Gln173, Asp177, Arg326, and 330 to 331; these read DLT and YY. Lys443 carries the N6-acetyllysine modification.

The protein belongs to the class-II aminoacyl-tRNA synthetase family. Homodimer.

The protein resides in the mitochondrion. The catalysed reaction is tRNA(His) + L-histidine + ATP = L-histidyl-tRNA(His) + AMP + diphosphate + H(+). Functionally, mitochondrial aminoacyl-tRNA synthetase that catalyzes the ATP-dependent ligation of histidine to the 3'-end of its cognate tRNA, via the formation of an aminoacyl-adenylate intermediate (His-AMP). This Mus musculus (Mouse) protein is Histidine--tRNA ligase, mitochondrial (Hars2).